A 208-amino-acid polypeptide reads, in one-letter code: Large ribosomal subunit protein uL3 (208 aa).

The residue at position 149 (Gln-149) is an N5-methylglutamine.

The protein belongs to the universal ribosomal protein uL3 family. Part of the 50S ribosomal subunit. Forms a cluster with proteins L14 and L19. Methylated by PrmB.

In terms of biological role, one of the primary rRNA binding proteins, it binds directly near the 3'-end of the 23S rRNA, where it nucleates assembly of the 50S subunit. This Glaesserella parasuis serovar 5 (strain SH0165) (Haemophilus parasuis) protein is Large ribosomal subunit protein uL3.